The chain runs to 281 residues: Beta-lactamase (281 aa).

An N-terminal signal peptide occupies residues methionine 1–alanine 24. Serine 63 (acyl-ester intermediate) is an active-site residue. Position 225–227 (lysine 225–glycine 227) interacts with substrate.

This sequence belongs to the class-A beta-lactamase family.

The enzyme catalyses a beta-lactam + H2O = a substituted beta-amino acid. The chain is Beta-lactamase (blaZ) from Staphylococcus aureus.